A 640-amino-acid chain; its full sequence is Asparagine synthetase domain-containing protein 1 (640 aa).

Cys2 serves as the catalytic For GATase activity. The Glutamine amidotransferase type-2 domain occupies 2–184; it reads CGICCAVSFS…ASGIFRIDLK (183 aa). One can recognise an Asparagine synthetase domain in the interval 286–602; that stretch reads QFIGVLSTAV…GLTASALLPK (317 aa).

In Bos taurus (Bovine), this protein is Asparagine synthetase domain-containing protein 1 (ASNSD1).